A 119-amino-acid chain; its full sequence is Membrane-anchored ubiquitin-fold protein 1 (119 aa).

Positions 9-75 (FEIKFRLPDG…LENNKTLSEC (67 aa)) constitute a Ubiquitin-like domain. Cys-116 carries the cysteine methyl ester modification. Cys-116 is lipidated: S-farnesyl cysteine. The propeptide at 117–119 (SIM) is removed in mature form.

It is found in the cell membrane. In terms of biological role, may serve as docking site to facilitate the association of other proteins to the plasma membrane. In Oryza sativa subsp. japonica (Rice), this protein is Membrane-anchored ubiquitin-fold protein 1 (MUB1).